The chain runs to 754 residues: Endothelin-converting enzyme 1 (754 aa).

Over 1–52 (MMSTYKRATLDEEDLVDSLSESDVYPNHLQVNFRGPRNGQRCWAARTPVEKR) the chain is Cytoplasmic. Thr9 carries the post-translational modification Phosphothreonine. Residues 53 to 73 (LVVLVALLAAALVACLAVLGI) form a helical; Signal-anchor for type II membrane protein membrane-spanning segment. Over 74-754 (QYQTRTPSVC…MNPHHKCEVW (681 aa)) the chain is Extracellular. One can recognise a Peptidase M13 domain in the interval 82–754 (VCLSEACISV…MNPHHKCEVW (673 aa)). Disulfide bonds link Cys83–Cys88, Cys106–Cys739, Cys114–Cys699, Cys169–Cys419, and Cys628–Cys751. 8 N-linked (GlcNAc...) asparagine glycosylation sites follow: Asn150, Asn171, Asn194, Asn254, Asn300, Asn346, Asn367, and Asn523. Position 591 (His591) interacts with Zn(2+). Residue Glu592 is part of the active site. His595 serves as a coordination point for Zn(2+). 2 N-linked (GlcNAc...) asparagine glycosylation sites follow: Asn616 and Asn635. Zn(2+) is bound at residue Glu651. Catalysis depends on Asp655, which acts as the Proton donor.

This sequence belongs to the peptidase M13 family. Homodimer; disulfide-linked. Interacts with PPP1R16B. Interacts with TSPAN8; this interaction recruits the endothelin converting enzyme ECE1 to tetraspanin-enriched microdomains and positively modulates its enzymatic activity. The cofactor is Zn(2+).

The protein resides in the cell membrane. The catalysed reaction is Hydrolysis of the 21-Trp-|-Val-22 bond in big endothelin to form endothelin 1.. Inhibited by phosphoramidon. Functionally, converts big endothelin-1 to endothelin-1. The sequence is that of Endothelin-converting enzyme 1 (ECE1) from Bos taurus (Bovine).